The following is a 113-amino-acid chain: Insulin-like peptide 02 (113 aa).

The first 22 residues, 1–22, serve as a signal peptide directing secretion; it reads MFYLTFLLFGAICIGQIQLGQP. The propeptide occupies 23–42; the sequence is VKFKVNEDGHRPSVYPIKYR. 3 cysteine pairs are disulfide-bonded: Cys-44-Cys-99, Cys-56-Cys-112, and Cys-98-Cys-103. A propeptide spans 62 to 87 (c peptide); that stretch reads RRKRSIEADIITDKDTANSYFNRVKR.

This sequence belongs to the insulin family.

The protein localises to the secreted. Functionally, insulin decreases blood glucose concentration. May have evolved to activate insulin receptors (INSR) in vertebrates. Molecular docking studies reveals unique interaction with the human insulin receptor. In vivo, insulin-like peptide injection reduces blood glucose levels in two models of zebrafish diabetes (streptozotocin- and glucose-induced). Also shorter swimming distance of zebrafish larvae, an effect which is not observed with human insulin. This is Insulin-like peptide 02 from Exaiptasia diaphana (Tropical sea anemone).